An 88-amino-acid chain; its full sequence is MAHKKGASSSRNGRDSNAQRLGVKRFGGQYVKAGEIIVRQRGTHFHPGDLVGRGKDDTLFALSPGHVRFGHRRGRRVVNVVAEAAVPA.

The tract at residues 1–21 (MAHKKGASSSRNGRDSNAQRL) is disordered. The segment covering 7-19 (ASSSRNGRDSNAQ) has biased composition (polar residues).

Belongs to the bacterial ribosomal protein bL27 family.

The polypeptide is Large ribosomal subunit protein bL27 (Frankia casuarinae (strain DSM 45818 / CECT 9043 / HFP020203 / CcI3)).